The following is a 598-amino-acid chain: Elongation factor 4 (598 aa).

In terms of domain architecture, tr-type G spans N2–Q184. GTP contacts are provided by residues D14–T19 and N131–D134.

The protein belongs to the TRAFAC class translation factor GTPase superfamily. Classic translation factor GTPase family. LepA subfamily.

It is found in the cell membrane. It carries out the reaction GTP + H2O = GDP + phosphate + H(+). Functionally, required for accurate and efficient protein synthesis under certain stress conditions. May act as a fidelity factor of the translation reaction, by catalyzing a one-codon backward translocation of tRNAs on improperly translocated ribosomes. Back-translocation proceeds from a post-translocation (POST) complex to a pre-translocation (PRE) complex, thus giving elongation factor G a second chance to translocate the tRNAs correctly. Binds to ribosomes in a GTP-dependent manner. The polypeptide is Elongation factor 4 (Wolbachia pipientis subsp. Culex pipiens (strain wPip)).